The following is a 317-amino-acid chain: Ribosomal protein L11 methyltransferase (317 aa).

Positions 158, 179, 201, and 244 each coordinate S-adenosyl-L-methionine.

Belongs to the methyltransferase superfamily. PrmA family.

The protein localises to the cytoplasm. The enzyme catalyses L-lysyl-[protein] + 3 S-adenosyl-L-methionine = N(6),N(6),N(6)-trimethyl-L-lysyl-[protein] + 3 S-adenosyl-L-homocysteine + 3 H(+). Its function is as follows. Methylates ribosomal protein L11. The sequence is that of Ribosomal protein L11 methyltransferase from Lactococcus lactis subsp. cremoris (strain SK11).